Here is a 360-residue protein sequence, read N- to C-terminus: Geranylgeranyl pyrophosphate synthase 12, chloroplastic (360 aa).

Residues 1–39 (MANTVHLSSSSLFIQTRGRKYNSILSFNNLQKRTVLSLS) constitute a chloroplast transit peptide. Isopentenyl diphosphate contacts are provided by K106, R109, and H138. The Mg(2+) site is built by D145 and D151. Residue R156 participates in dimethylallyl diphosphate binding. R157 contributes to the isopentenyl diphosphate binding site. The dimethylallyl diphosphate site is built by K245, T246, Q283, K300, and K310.

Belongs to the FPP/GGPP synthase family. As to quaternary structure, monomer. It depends on Mg(2+) as a cofactor.

It is found in the plastid. Its subcellular location is the chloroplast. It catalyses the reaction isopentenyl diphosphate + dimethylallyl diphosphate = (2E)-geranyl diphosphate + diphosphate. The catalysed reaction is isopentenyl diphosphate + (2E)-geranyl diphosphate = (2E,6E)-farnesyl diphosphate + diphosphate. It carries out the reaction isopentenyl diphosphate + (2E,6E)-farnesyl diphosphate = (2E,6E,10E)-geranylgeranyl diphosphate + diphosphate. The protein operates within isoprenoid biosynthesis; farnesyl diphosphate biosynthesis; farnesyl diphosphate from geranyl diphosphate and isopentenyl diphosphate: step 1/1. It participates in isoprenoid biosynthesis; geranyl diphosphate biosynthesis; geranyl diphosphate from dimethylallyl diphosphate and isopentenyl diphosphate: step 1/1. It functions in the pathway isoprenoid biosynthesis; geranylgeranyl diphosphate biosynthesis; geranylgeranyl diphosphate from farnesyl diphosphate and isopentenyl diphosphate: step 1/1. Functionally, catalyzes the trans-addition of the three molecules of IPP onto DMAPP to form geranylgeranyl pyrophosphate. The chain is Geranylgeranyl pyrophosphate synthase 12, chloroplastic from Arabidopsis thaliana (Mouse-ear cress).